The following is a 609-amino-acid chain: Granule-bound starch synthase 1, chloroplastic/amyloplastic (609 aa).

A chloroplast-targeting transit peptide spans M1–Y77. The disordered stretch occupies residues R29–G67. Positions T46–R66 are enriched in polar residues. Residue K97 participates in ADP-alpha-D-glucose binding.

This sequence belongs to the glycosyltransferase 1 family. Bacterial/plant glycogen synthase subfamily.

The protein localises to the plastid. The protein resides in the chloroplast. Its subcellular location is the amyloplast. The enzyme catalyses an NDP-alpha-D-glucose + [(1-&gt;4)-alpha-D-glucosyl](n) = [(1-&gt;4)-alpha-D-glucosyl](n+1) + a ribonucleoside 5'-diphosphate + H(+). It participates in glycan biosynthesis; starch biosynthesis. Functionally, required for the synthesis of amylose in endosperm. The protein is Granule-bound starch synthase 1, chloroplastic/amyloplastic (WAXY) of Oryza glaberrima (African rice).